The sequence spans 404 residues: Argininosuccinate synthase (404 aa).

Position 7-15 (7-15 (AYSGGLDTS)) interacts with ATP. Tyrosine 85 and serine 90 together coordinate L-citrulline. Glycine 115 contributes to the ATP binding site. L-aspartate-binding residues include threonine 117, asparagine 121, and aspartate 122. L-citrulline is bound at residue asparagine 121. Residues arginine 125, serine 178, serine 187, glutamate 264, and tyrosine 276 each contribute to the L-citrulline site.

The protein belongs to the argininosuccinate synthase family. Type 1 subfamily. Homotetramer.

Its subcellular location is the cytoplasm. The catalysed reaction is L-citrulline + L-aspartate + ATP = 2-(N(omega)-L-arginino)succinate + AMP + diphosphate + H(+). It participates in amino-acid biosynthesis; L-arginine biosynthesis; L-arginine from L-ornithine and carbamoyl phosphate: step 2/3. The sequence is that of Argininosuccinate synthase from Rhodopirellula baltica (strain DSM 10527 / NCIMB 13988 / SH1).